A 210-amino-acid chain; its full sequence is Imidazole glycerol phosphate synthase subunit HisH 1 (210 aa).

Residues 3–210 (KIAIVDYGMC…LDNFLSFSNV (208 aa)) form the Glutamine amidotransferase type-1 domain. The Nucleophile role is filled by cysteine 82. Active-site residues include histidine 189 and glutamate 191.

In terms of assembly, heterodimer of HisH and HisF.

The protein localises to the cytoplasm. It carries out the reaction 5-[(5-phospho-1-deoxy-D-ribulos-1-ylimino)methylamino]-1-(5-phospho-beta-D-ribosyl)imidazole-4-carboxamide + L-glutamine = D-erythro-1-(imidazol-4-yl)glycerol 3-phosphate + 5-amino-1-(5-phospho-beta-D-ribosyl)imidazole-4-carboxamide + L-glutamate + H(+). The enzyme catalyses L-glutamine + H2O = L-glutamate + NH4(+). Its pathway is amino-acid biosynthesis; L-histidine biosynthesis; L-histidine from 5-phospho-alpha-D-ribose 1-diphosphate: step 5/9. IGPS catalyzes the conversion of PRFAR and glutamine to IGP, AICAR and glutamate. The HisH subunit provides the glutamine amidotransferase activity that produces the ammonia necessary to HisF for the synthesis of IGP and AICAR. This Parasynechococcus marenigrum (strain WH8102) protein is Imidazole glycerol phosphate synthase subunit HisH 1 (hisH1).